A 272-amino-acid chain; its full sequence is Shikimate dehydrogenase (NADP(+)) (272 aa).

Shikimate contacts are provided by residues 14–16 and T61; that span reads SKS. K65 functions as the Proton acceptor in the catalytic mechanism. E77 is an NADP(+) binding site. Positions 86 and 102 each coordinate shikimate. Residues 126-130, 149-154, and M213 contribute to the NADP(+) site; these read GAGGA and NRTVSR. Y215 contacts shikimate. G237 contacts NADP(+).

Belongs to the shikimate dehydrogenase family. Homodimer.

The catalysed reaction is shikimate + NADP(+) = 3-dehydroshikimate + NADPH + H(+). The protein operates within metabolic intermediate biosynthesis; chorismate biosynthesis; chorismate from D-erythrose 4-phosphate and phosphoenolpyruvate: step 4/7. Involved in the biosynthesis of the chorismate, which leads to the biosynthesis of aromatic amino acids. Catalyzes the reversible NADPH linked reduction of 3-dehydroshikimate (DHSA) to yield shikimate (SA). The protein is Shikimate dehydrogenase (NADP(+)) of Escherichia coli O7:K1 (strain IAI39 / ExPEC).